Consider the following 224-residue polypeptide: Protein GrpE (224 aa).

2 stretches are compositionally biased toward polar residues: residues 1–16 and 209–224; these read MSGD…NVES and ESSS…EGDA. Disordered regions lie at residues 1-35 and 203-224; these read MSGD…DPVV and SMGP…EGDA.

Belongs to the GrpE family. Homodimer.

It is found in the cytoplasm. In terms of biological role, participates actively in the response to hyperosmotic and heat shock by preventing the aggregation of stress-denatured proteins, in association with DnaK and GrpE. It is the nucleotide exchange factor for DnaK and may function as a thermosensor. Unfolded proteins bind initially to DnaJ; upon interaction with the DnaJ-bound protein, DnaK hydrolyzes its bound ATP, resulting in the formation of a stable complex. GrpE releases ADP from DnaK; ATP binding to DnaK triggers the release of the substrate protein, thus completing the reaction cycle. Several rounds of ATP-dependent interactions between DnaJ, DnaK and GrpE are required for fully efficient folding. In Synechococcus sp. (strain CC9902), this protein is Protein GrpE.